Reading from the N-terminus, the 368-residue chain is 3-dehydroquinate synthase (368 aa).

NAD(+) contacts are provided by residues 76–81 (DGEQYK), 110–114 (GVIGD), 134–135 (TT), lysine 147, lysine 156, and 174–177 (CLKT). Zn(2+) contacts are provided by glutamate 189, histidine 252, and histidine 269.

Belongs to the sugar phosphate cyclases superfamily. Dehydroquinate synthase family. NAD(+) is required as a cofactor. Requires Co(2+) as cofactor. Zn(2+) serves as cofactor.

It localises to the cytoplasm. It carries out the reaction 7-phospho-2-dehydro-3-deoxy-D-arabino-heptonate = 3-dehydroquinate + phosphate. Its pathway is metabolic intermediate biosynthesis; chorismate biosynthesis; chorismate from D-erythrose 4-phosphate and phosphoenolpyruvate: step 2/7. Catalyzes the conversion of 3-deoxy-D-arabino-heptulosonate 7-phosphate (DAHP) to dehydroquinate (DHQ). This chain is 3-dehydroquinate synthase, found in Vibrio vulnificus (strain YJ016).